Consider the following 908-residue polypeptide: Metabotropic glutamate receptor 8 (908 aa).

The signal sequence occupies residues 1-33 (MVCEGKRLASCPCFFLLTAKFYWILTMMQRTHS). The Extracellular portion of the chain corresponds to 34–583 (QEYAHSIRVD…IIKLEWHSPW (550 aa)). The cysteines at positions 64 and 106 are disulfide-linked. Asn95 carries N-linked (GlcNAc...) asparagine glycosylation. L-glutamate contacts are provided by residues Ser156, 177-179 (AST), and Tyr227. 7 disulfides stabilise this stretch: Cys246–Cys534, Cys369–Cys384, Cys424–Cys431, Cys516–Cys535, Cys520–Cys538, Cys541–Cys553, and Cys556–Cys569. The N-linked (GlcNAc...) asparagine glycan is linked to Asn298. Residue Asp309 coordinates L-glutamate. L-glutamate is bound at residue Lys401. N-linked (GlcNAc...) asparagine glycosylation is found at Asn452 and Asn480. Residue Asn565 is glycosylated (N-linked (GlcNAc...) asparagine). Residues 584–608 (AVVPVFIAILGIIATTFVIVTFVRY) form a helical membrane-spanning segment. Residues 609 to 620 (NDTPIVRASGRE) lie on the Cytoplasmic side of the membrane. Residues 621–641 (LSYVLLTGIFLCYSITFLMIA) traverse the membrane as a helical segment. Residues 642–647 (APDTII) lie on the Extracellular side of the membrane. Residues 648–668 (CSFRRIFLGLGMCFSYAALLT) form a helical membrane-spanning segment. Residues 669-695 (KTNRIHRIFEQGKKSVTAPKFISPASQ) are Cytoplasmic-facing. The helical transmembrane segment at 696 to 716 (LVITFSLISVQLLGVFVWFVV) threads the bilayer. Topologically, residues 717 to 746 (DPPHTIIDYGEQRTLDPENARGVLKCDISD) are extracellular. The chain crosses the membrane as a helical span at residues 747-768 (LSLICSLGYSILLMVTCTVYAI). The Cytoplasmic portion of the chain corresponds to 769-781 (KTRGVPETFNEAK). A helical transmembrane segment spans residues 782–803 (PIGFTMYTTCIIWLAFIPIFFG). Topologically, residues 804–818 (TAQSAEKMYIQTTTL) are extracellular. A helical transmembrane segment spans residues 819–843 (TVSMSLSASVSLGMLYMPKVYIIIF). At 844 to 908 (HPEQNVQKRK…TYISYSNHSI (65 aa)) the chain is on the cytoplasmic side. Residue Lys882 forms a Glycyl lysine isopeptide (Lys-Gly) (interchain with G-Cter in SUMO1) linkage.

This sequence belongs to the G-protein coupled receptor 3 family. Interacts with PICK1. As to expression, prominent expression in olfactory bulb, pontine gray, lateral reticular nucleus of the thalamus, and piriform cortex. Less abundant expression incerebral cortex, hippocampus, cerebellum, and mammillary body.

Its subcellular location is the cell membrane. Functionally, G-protein coupled receptor for glutamate. Ligand binding causes a conformation change that triggers signaling via guanine nucleotide-binding proteins (G proteins) and modulates the activity of down-stream effectors. Signaling inhibits adenylate cyclase activity. In Rattus norvegicus (Rat), this protein is Metabotropic glutamate receptor 8 (Grm8).